The chain runs to 367 residues: UDP-N-acetylglucosamine--N-acetylmuramyl-(pentapeptide) pyrophosphoryl-undecaprenol N-acetylglucosamine transferase (367 aa).

UDP-N-acetyl-alpha-D-glucosamine is bound by residues 15–17 (TGG), Asn127, Arg163, Ser191, Ile249, and Gln294.

This sequence belongs to the glycosyltransferase 28 family. MurG subfamily.

It localises to the cell inner membrane. The enzyme catalyses di-trans,octa-cis-undecaprenyl diphospho-N-acetyl-alpha-D-muramoyl-L-alanyl-D-glutamyl-meso-2,6-diaminopimeloyl-D-alanyl-D-alanine + UDP-N-acetyl-alpha-D-glucosamine = di-trans,octa-cis-undecaprenyl diphospho-[N-acetyl-alpha-D-glucosaminyl-(1-&gt;4)]-N-acetyl-alpha-D-muramoyl-L-alanyl-D-glutamyl-meso-2,6-diaminopimeloyl-D-alanyl-D-alanine + UDP + H(+). It participates in cell wall biogenesis; peptidoglycan biosynthesis. Its function is as follows. Cell wall formation. Catalyzes the transfer of a GlcNAc subunit on undecaprenyl-pyrophosphoryl-MurNAc-pentapeptide (lipid intermediate I) to form undecaprenyl-pyrophosphoryl-MurNAc-(pentapeptide)GlcNAc (lipid intermediate II). This is UDP-N-acetylglucosamine--N-acetylmuramyl-(pentapeptide) pyrophosphoryl-undecaprenol N-acetylglucosamine transferase from Burkholderia pseudomallei (strain 668).